The primary structure comprises 199 residues: MSVRATISDSKSDFHKEFPYVIPAIYRKLADELLVELHLLSHQKNFKKDSIFSTGLKEVFCKFTSGYKPSEHVTKLFDAICNCNGFNPTEINNSSEQLVSNAKSFTKEDLNSFLSKTNNDNKGYDYYSRINAIGIYKLVSEMPLFKEVKEEDLNKEINDISKSLGYQYSRVEKDISMYKSNIEKMKQALEIIALNLKTK.

Residues 167–198 are a coiled coil; it reads QYSRVEKDISMYKSNIEKMKQALEIIALNLKT.

This sequence belongs to the THF1 family.

May be involved in photosynthetic membrane biogenesis. The protein is Protein Thf1 of Prochlorococcus marinus (strain NATL1A).